Consider the following 53-residue polypeptide: UPF0391 membrane protein gsr2640 (53 aa).

Helical transmembrane passes span L4 to V24 and W32 to G49.

The protein belongs to the UPF0391 family.

It is found in the cell membrane. The chain is UPF0391 membrane protein gsr2640 from Gloeobacter violaceus (strain ATCC 29082 / PCC 7421).